Here is a 254-residue protein sequence, read N- to C-terminus: Insulin-like growth factor-binding protein 4 (254 aa).

The N-terminal stretch at 1–21 (MLPFGLVAALLLAAGPRPSLG) is a signal peptide. An IGFBP N-terminal domain is found at 23–103 (EAIHCPPCSE…MHGQGVCTEL (81 aa)). Disulfide bonds link cysteine 27/cysteine 53, cysteine 30/cysteine 55, cysteine 38/cysteine 56, cysteine 44/cysteine 59, cysteine 67/cysteine 80, and cysteine 74/cysteine 100. N-linked (GlcNAc...) asparagine glycosylation occurs at asparagine 125. Cysteines 131 and 138 form a disulfide. Positions 149-169 (RSKMKVVGTPREEPRPVPQGS) are disordered. The Thyroglobulin type-1 domain maps to 167-245 (QGSCQSELHR…GLEPKGELDC (79 aa)). Disulfide bonds link cysteine 170–cysteine 200, cysteine 211–cysteine 222, and cysteine 224–cysteine 245. Serine 251 carries the phosphoserine modification.

Binds IGF2 more than IGF1.

The protein resides in the secreted. Its function is as follows. IGF-binding proteins prolong the half-life of the IGFs and have been shown to either inhibit or stimulate the growth promoting effects of the IGFs on cell culture. They alter the interaction of IGFs with their cell surface receptors. The polypeptide is Insulin-like growth factor-binding protein 4 (Igfbp4) (Rattus norvegicus (Rat)).